A 133-amino-acid polypeptide reads, in one-letter code: Small ribosomal subunit protein uS8 (133 aa).

Belongs to the universal ribosomal protein uS8 family. In terms of assembly, part of the 30S ribosomal subunit. Contacts proteins S5 and S12.

One of the primary rRNA binding proteins, it binds directly to 16S rRNA central domain where it helps coordinate assembly of the platform of the 30S subunit. The protein is Small ribosomal subunit protein uS8 of Nostoc punctiforme (strain ATCC 29133 / PCC 73102).